A 324-amino-acid polypeptide reads, in one-letter code: Beta-ketoacyl-[acyl-carrier-protein] synthase III (324 aa).

Active-site residues include Cys-112 and His-249. An ACP-binding region spans residues 250–254; the sequence is QANRR. Residue Asn-279 is part of the active site.

This sequence belongs to the thiolase-like superfamily. FabH family. In terms of assembly, homodimer.

The protein localises to the cytoplasm. The catalysed reaction is malonyl-[ACP] + acetyl-CoA + H(+) = 3-oxobutanoyl-[ACP] + CO2 + CoA. It participates in lipid metabolism; fatty acid biosynthesis. Its function is as follows. Catalyzes the condensation reaction of fatty acid synthesis by the addition to an acyl acceptor of two carbons from malonyl-ACP. Catalyzes the first condensation reaction which initiates fatty acid synthesis and may therefore play a role in governing the total rate of fatty acid production. Possesses both acetoacetyl-ACP synthase and acetyl transacylase activities. Its substrate specificity determines the biosynthesis of branched-chain and/or straight-chain of fatty acids. The protein is Beta-ketoacyl-[acyl-carrier-protein] synthase III of Streptococcus pyogenes serotype M1.